Here is a 245-residue protein sequence, read N- to C-terminus: Eukaryotic translation initiation factor 6 (245 aa).

Belongs to the eIF-6 family. Monomer. Associates with the 60S ribosomal subunit.

It localises to the cytoplasm. The protein localises to the nucleus. Its subcellular location is the nucleolus. Functionally, binds to the 60S ribosomal subunit and prevents its association with the 40S ribosomal subunit to form the 80S initiation complex in the cytoplasm. May also be involved in ribosome biogenesis. This Danio rerio (Zebrafish) protein is Eukaryotic translation initiation factor 6 (eif6).